We begin with the raw amino-acid sequence, 139 residues long: Small ribosomal subunit protein uS12 (139 aa).

Residues 1-44 (MPTINQLVRKPRQSKITKSKSPALNKGYNSFKKSLTDVKSPQKR) are disordered. The span at 9-18 (RKPRQSKITK) shows a compositional bias: basic residues. Residues 19 to 39 (SKSPALNKGYNSFKKSLTDVK) are compositionally biased toward polar residues. 3-methylthioaspartic acid is present on Asp102.

The protein belongs to the universal ribosomal protein uS12 family. Part of the 30S ribosomal subunit. Contacts proteins S8 and S17. May interact with IF1 in the 30S initiation complex.

Functionally, with S4 and S5 plays an important role in translational accuracy. In terms of biological role, interacts with and stabilizes bases of the 16S rRNA that are involved in tRNA selection in the A site and with the mRNA backbone. Located at the interface of the 30S and 50S subunits, it traverses the body of the 30S subunit contacting proteins on the other side and probably holding the rRNA structure together. The combined cluster of proteins S8, S12 and S17 appears to hold together the shoulder and platform of the 30S subunit. The sequence is that of Small ribosomal subunit protein uS12 from Lysinibacillus sphaericus (strain C3-41).